The primary structure comprises 650 residues: Solute carrier family 23 member 2 (650 aa).

Over residues 1–20 the composition is skewed to polar residues; it reads MMGIGKNTTSKSMEAGSSTE. The disordered stretch occupies residues 1–21; the sequence is MMGIGKNTTSKSMEAGSSTEG. Residues 9 to 110 are Cytoplasmic-facing; the sequence is TSKSMEAGSS…LCIFLGLQHY (102 aa). Phosphoserine is present on serine 70. A Phosphothreonine modification is found at threonine 75. Serine 78 is subject to Phosphoserine. Threonine 79 carries the post-translational modification Phosphothreonine. The residue at position 81 (serine 81) is a Phosphoserine. The chain crosses the membrane as a helical span at residues 111-131; sequence LTCFSGTIAVPFLLADAMCVG. Topologically, residues 132-139 are extracellular; sequence YDQWATSQ. Residues 140-160 traverse the membrane as a helical segment; sequence LIGTIFFCVGITTLLQTTFGC. Position 161 (arginine 161) is a topological domain, cytoplasmic. A helical transmembrane segment spans residues 162-182; that stretch reads LPLFQASAFAFLAPARAILSL. Residues 183-218 lie on the Extracellular side of the membrane; that stretch reads DKWKCNTTDVSVANGTAELLHTEHIWYPRIREIQGA. N-linked (GlcNAc...) asparagine glycosylation is found at asparagine 188 and asparagine 196. The chain crosses the membrane as a helical span at residues 219–239; the sequence is IIMSSLIEVVIGLLGLPGALL. Topologically, residues 240-266 are cytoplasmic; sequence KYIGPLTITPTVALIGLSGFQAAGERA. A helical transmembrane segment spans residues 267-284; that stretch reads GKHWGIAMLTIFLVLLFS. Residues 285 to 288 are Extracellular-facing; that stretch reads QYAR. Residues 289 to 302 constitute an intramembrane region (helical); sequence NVKFPLPIYKSKKG. Over 303–309 the chain is Extracellular; the sequence is WTAYKLQ. A helical membrane pass occupies residues 310–330; that stretch reads LFKMFPIILAILVSWLLCFIF. Residues 331 to 371 lie on the Cytoplasmic side of the membrane; the sequence is TVTDVFPPDSTKYGFYARTDARQGVLLVAPWFKVPYPFQWG. A helical membrane pass occupies residues 372-392; sequence LPTVSAAGVIGMLSAVVASII. The Extracellular portion of the chain corresponds to 393-417; it reads ESIGDYYACARLSCAPPPPIHAINR. The helical transmembrane segment at 418–438 threads the bilayer; the sequence is GIFVEGLSCVLDGIFGTGNGS. The Cytoplasmic portion of the chain corresponds to 439-461; that stretch reads TSSSPNIGVLGITKVGSRRVIQC. A helical membrane pass occupies residues 462-482; that stretch reads GAALMLALGMIGKFSALFASL. Residues 483 to 485 are Extracellular-facing; the sequence is PDP. A helical membrane pass occupies residues 486–506; sequence VLGALFCTLFGMITAVGLSNL. Over 507–516 the chain is Cytoplasmic; that stretch reads QFIDLNSSRN. The helical transmembrane segment at 517-537 threads the bilayer; the sequence is LFVLGFSIFFGLVLPSYLRQN. Residues 538-547 lie on the Extracellular side of the membrane; that stretch reads PLVTGITGID. A helical membrane pass occupies residues 548–568; sequence QVLNVLLTTAMFVGGCVAFIL. Topologically, residues 569–650 are cytoplasmic; that stretch reads DNTIPGTPEE…SSDEDSQATG (82 aa). Position 649 is a phosphothreonine (threonine 649).

This sequence belongs to the nucleobase:cation symporter-2 (NCS2) (TC 2.A.40) family. In terms of assembly, interacts with CLSTN3. In terms of processing, phosphorylated. In terms of tissue distribution, ubiquitous.

It localises to the cell membrane. It carries out the reaction L-ascorbate(out) + 2 Na(+)(out) = L-ascorbate(in) + 2 Na(+)(in). In terms of biological role, sodium/ascorbate cotransporter. Mediates electrogenic uptake of vitamin C, with a stoichiometry of 2 Na(+) for each ascorbate. The polypeptide is Solute carrier family 23 member 2 (SLC23A2) (Homo sapiens (Human)).